Reading from the N-terminus, the 256-residue chain is 1-(5-phosphoribosyl)-5-[(5-phosphoribosylamino)methylideneamino] imidazole-4-carboxamide isomerase (256 aa).

Asp8 functions as the Proton acceptor in the catalytic mechanism. Asp129 serves as the catalytic Proton donor.

It belongs to the HisA/HisF family.

The protein localises to the cytoplasm. The enzyme catalyses 1-(5-phospho-beta-D-ribosyl)-5-[(5-phospho-beta-D-ribosylamino)methylideneamino]imidazole-4-carboxamide = 5-[(5-phospho-1-deoxy-D-ribulos-1-ylimino)methylamino]-1-(5-phospho-beta-D-ribosyl)imidazole-4-carboxamide. Its pathway is amino-acid biosynthesis; L-histidine biosynthesis; L-histidine from 5-phospho-alpha-D-ribose 1-diphosphate: step 4/9. This Picosynechococcus sp. (strain ATCC 27264 / PCC 7002 / PR-6) (Agmenellum quadruplicatum) protein is 1-(5-phosphoribosyl)-5-[(5-phosphoribosylamino)methylideneamino] imidazole-4-carboxamide isomerase.